Consider the following 439-residue polypeptide: Glutamate-1-semialdehyde 2,1-aminomutase (439 aa).

Lys-273 bears the N6-(pyridoxal phosphate)lysine mark.

Belongs to the class-III pyridoxal-phosphate-dependent aminotransferase family. HemL subfamily. In terms of assembly, homodimer. Pyridoxal 5'-phosphate serves as cofactor.

It is found in the cytoplasm. It carries out the reaction (S)-4-amino-5-oxopentanoate = 5-aminolevulinate. It functions in the pathway porphyrin-containing compound metabolism; protoporphyrin-IX biosynthesis; 5-aminolevulinate from L-glutamyl-tRNA(Glu): step 2/2. The polypeptide is Glutamate-1-semialdehyde 2,1-aminomutase (Paenarthrobacter aurescens (strain TC1)).